The sequence spans 93 residues: Peptide YY-like (93 aa).

The signal sequence occupies residues 1–27 (MVSPRVRLAALALSVCAILCLGMHASA). Tyr63 bears the Tyrosine amide mark. A propeptide spans 65 to 93 (KRALTPENWIYRDPAEERVTYGLDDYAMW) (C-terminal extension).

It belongs to the NPY family. In terms of tissue distribution, gut and medial reticulospinal neuron system in the brainstem.

Its subcellular location is the secreted. In terms of biological role, gastrointestinal hormone and neuropeptide. This Lampetra fluviatilis (European river lamprey) protein is Peptide YY-like (pyy).